A 417-amino-acid chain; its full sequence is NADH-quinone oxidoreductase subunit D (417 aa).

Belongs to the complex I 49 kDa subunit family. As to quaternary structure, NDH-1 is composed of 14 different subunits. Subunits NuoB, C, D, E, F, and G constitute the peripheral sector of the complex.

It is found in the cell inner membrane. The enzyme catalyses a quinone + NADH + 5 H(+)(in) = a quinol + NAD(+) + 4 H(+)(out). Its function is as follows. NDH-1 shuttles electrons from NADH, via FMN and iron-sulfur (Fe-S) centers, to quinones in the respiratory chain. The immediate electron acceptor for the enzyme in this species is believed to be ubiquinone. Couples the redox reaction to proton translocation (for every two electrons transferred, four hydrogen ions are translocated across the cytoplasmic membrane), and thus conserves the redox energy in a proton gradient. This Alkalilimnicola ehrlichii (strain ATCC BAA-1101 / DSM 17681 / MLHE-1) protein is NADH-quinone oxidoreductase subunit D.